A 720-amino-acid polypeptide reads, in one-letter code: TAL effector protein Rip19 (720 aa).

2 disordered regions span residues 13–85 (SVSL…PSLV) and 175–205 (QAFA…PTFL). The span at 67–85 (PRRPLPVAPASAPPAPSLV) shows a compositional bias: pro residues. A Nuclear localization signal 1 motif is present at residues 185-191 (RSARARR). The Cryptic repeat -1 repeat unit spans residues 286 to 320 (LTRAHIVDIARQRSGDLALQALLPVATALTAAPLR). The Cryptic repeat 0 repeat unit spans residues 321–354 (LSASQIATVAQYGERPAIQALYRLRRKLTRAPLH). The Core repeat 1 repeat unit spans residues 355-389 (LTPQQVVAIASHDGGKPALEAVWAKLPVLRGVPYA). The stretch at 390 to 423 (LSTAQVVAIACISGQQALEAIEAHMPTLRQAPHS) is one Cryptic repeat +1 repeat. The Cryptic repeat +2 repeat unit spans residues 424-457 (LSPERVAAIACIGGRSAVEAVRQGLPVKAIRRIR). 3 consecutive short sequence motifs (nuclear localization signal) follow at residues 455 to 458 (RIRR), 583 to 586 (HRKR), and 620 to 623 (RRKR). The interval 571-611 (SPGMAGQSACSPHRKRPAETAIAPRSIRRRPNNAGQPSEPW) is disordered.

This sequence belongs to the transcription activator-like effector (TALE) family. RipTAL/RTL subfamily.

It is found in the secreted. The protein localises to the host nucleus. Does not activate plant gene transcription, because it has too few core repeats. The polypeptide is TAL effector protein Rip19 (Ralstonia solanacearum (Pseudomonas solanacearum)).